A 389-amino-acid polypeptide reads, in one-letter code: Phosphoribosylformylglycinamidine cyclo-ligase, chloroplastic (389 aa).

The N-terminal 58 residues, 1-58 (MEARILQSSSSCYSSLYAVNRSRFSSVSSPKPFSVSFAQTTRTRTRVLSMSKKDGRTD), are a transit peptide targeting the chloroplast. Residues 46 to 65 (RVLSMSKKDGRTDKDDDTDS) form a disordered region.

This sequence belongs to the AIR synthase family.

It localises to the plastid. It is found in the chloroplast. It catalyses the reaction 2-formamido-N(1)-(5-O-phospho-beta-D-ribosyl)acetamidine + ATP = 5-amino-1-(5-phospho-beta-D-ribosyl)imidazole + ADP + phosphate + H(+). It participates in purine metabolism; IMP biosynthesis via de novo pathway; 5-amino-1-(5-phospho-D-ribosyl)imidazole from N(2)-formyl-N(1)-(5-phospho-D-ribosyl)glycinamide: step 2/2. This Arabidopsis thaliana (Mouse-ear cress) protein is Phosphoribosylformylglycinamidine cyclo-ligase, chloroplastic (PUR5).